A 173-amino-acid chain; its full sequence is 2-C-methyl-D-erythritol 2,4-cyclodiphosphate synthase (173 aa).

Positions 17 and 19 each coordinate a divalent metal cation. Residues 17–19 (DVH) and 49–50 (HS) each bind 4-CDP-2-C-methyl-D-erythritol 2-phosphate. His57 is a binding site for a divalent metal cation. 4-CDP-2-C-methyl-D-erythritol 2-phosphate contacts are provided by residues 76–80 (FPNTD), 147–150 (TTTE), Phe154, and Arg157.

Belongs to the IspF family. As to quaternary structure, homotrimer. Requires a divalent metal cation as cofactor.

The catalysed reaction is 4-CDP-2-C-methyl-D-erythritol 2-phosphate = 2-C-methyl-D-erythritol 2,4-cyclic diphosphate + CMP. It participates in isoprenoid biosynthesis; isopentenyl diphosphate biosynthesis via DXP pathway; isopentenyl diphosphate from 1-deoxy-D-xylulose 5-phosphate: step 4/6. Involved in the biosynthesis of isopentenyl diphosphate (IPP) and dimethylallyl diphosphate (DMAPP), two major building blocks of isoprenoid compounds. Catalyzes the conversion of 4-diphosphocytidyl-2-C-methyl-D-erythritol 2-phosphate (CDP-ME2P) to 2-C-methyl-D-erythritol 2,4-cyclodiphosphate (ME-CPP) with a corresponding release of cytidine 5-monophosphate (CMP). This chain is 2-C-methyl-D-erythritol 2,4-cyclodiphosphate synthase, found in Ehrlichia canis (strain Jake).